The following is a 603-amino-acid chain: MEKMNQGDRPFMTIQRNDSSDHLVLHMKNEMRNTKYKPVDYQQLRVLTEAKKLASASAELKIRKAMLTSKISKEQTLIKQHKQVWWQEYQRLNEVRYKMESEIKSLLNEENIGNECLCDLTNFEQELSEQWCTYLKNVINPIQQLRADLKYRQHHTLQHSHPHVEFNSVKVLEEVDFVKKQLKTVFERLGLEQQRIENDLSGWSIKILDHSLEEKTNLLSELPIELGSLECPYPDLKSSIHSEFCKFTQKYQKKLQDVDLQLEDIYRNCQLSEEDHWIYQAILDQYPGDLFGRRTLYLDMLQRYFPHKSRHDLIEHEKYCDQYRFAMEQRKILISNWNKNKKDFTQKAVLTLIEACAAHEMESTLAKDKKKQQELCADLKAKVLQWRAHQEEVARLEMEISARRREKEEEKEKLWKKKELLQRAEKKKKIKKYWAMKKQKWQEMEMRDLQRLEELKKLMAEQSLKDRERVKYRKELLERRLMEKKEAALQEAHEDKERARRLEALRKQVAVVAQFDPVRMMSDTMASKARMGIEIEEEFILQKPLFTLNTYNEQQIISDPRLRFELALREAGLHRTLYAKEILPKISPRKPPRKDMESTVFKI.

2 coiled-coil regions span residues 365–429 (LAKD…KKKK) and 461–510 (EQSL…KQVA).

In Macaca fascicularis (Crab-eating macaque), this protein is Coiled-coil domain-containing protein 148 (CCDC148).